Consider the following 320-residue polypeptide: MTQYLDFEKPLAEIEGKAEELRALARANEEMDVAEEAAALDAKAAKLLDELYRDLTPWRKCQVARHPERPHCRDYVDALFTEYTPLAGDRNFADDLAVMGGLARFNDRPVMVIGHEKGSDTKSRIAHNFGMARPEGYRKAVRLIEMAGRFGLPVVTLVDTAGAYPGKGAEERGQSEAIARSTEMCLRAGVPLVSVIIGEGGSGGAVAFATANRVAMLEHSIYSVISPEGCASILWKNAEKMREAAEALRLTAQDLLKLGVVDRVIPEPRGGAHRDKTAAMEAVRGAIAAMLKELDGKSAEALIKDRRKKFLDIGSKGLAA.

Positions 39 to 293 (ALDAKAAKLL…RGAIAAMLKE (255 aa)) constitute a CoA carboxyltransferase C-terminal domain.

The protein belongs to the AccA family. As to quaternary structure, acetyl-CoA carboxylase is a heterohexamer composed of biotin carboxyl carrier protein (AccB), biotin carboxylase (AccC) and two subunits each of ACCase subunit alpha (AccA) and ACCase subunit beta (AccD).

The protein resides in the cytoplasm. It carries out the reaction N(6)-carboxybiotinyl-L-lysyl-[protein] + acetyl-CoA = N(6)-biotinyl-L-lysyl-[protein] + malonyl-CoA. It participates in lipid metabolism; malonyl-CoA biosynthesis; malonyl-CoA from acetyl-CoA: step 1/1. Its function is as follows. Component of the acetyl coenzyme A carboxylase (ACC) complex. First, biotin carboxylase catalyzes the carboxylation of biotin on its carrier protein (BCCP) and then the CO(2) group is transferred by the carboxyltransferase to acetyl-CoA to form malonyl-CoA. The chain is Acetyl-coenzyme A carboxylase carboxyl transferase subunit alpha from Ruegeria pomeroyi (strain ATCC 700808 / DSM 15171 / DSS-3) (Silicibacter pomeroyi).